The primary structure comprises 88 residues: Small ribosomal subunit protein bS16 (88 aa).

Belongs to the bacterial ribosomal protein bS16 family.

This chain is Small ribosomal subunit protein bS16, found in Mycoplasmopsis pulmonis (strain UAB CTIP) (Mycoplasma pulmonis).